An 836-amino-acid chain; its full sequence is RNA-binding protein 12B-A (836 aa).

An RRM 1 domain is found at 154-229; the sequence is PYLFLRGLPY…RFIEVMQGSE (76 aa). The segment at 237–277 is disordered; sequence GTATEGGDTPRMRSEEHSPSRRINGRHFRKRSHSKSPRARS. Positions 244 to 255 are enriched in basic and acidic residues; the sequence is DTPRMRSEEHSP. A compositionally biased stretch (basic residues) spans 259 to 277; sequence INGRHFRKRSHSKSPRARS. RRM domains follow at residues 283–359 and 401–478; these read FYVH…PVSR and LCIY…LISE. Disordered regions lie at residues 539-572 and 620-644; these read GHFKHPQGYFRQSDRRSPEDFRHSPEDYRHPWEE and SQEHFRRSYQEHIRQPPEEHFRRSR. The segment covering 550-572 has biased composition (basic and acidic residues); sequence QSDRRSPEDFRHSPEDYRHPWEE. Residue Ser-703 is modified to Phosphoserine. Lys-758 bears the N6-acetyllysine mark. The 77-residue stretch at 760–836 folds into the RRM 4 domain; it reads IPVKISNLPF…GPRKVKLSLL (77 aa).

The polypeptide is RNA-binding protein 12B-A (Rbm12b1) (Mus musculus (Mouse)).